The chain runs to 92 residues: Small ribosomal subunit protein bS20 (92 aa).

The protein belongs to the bacterial ribosomal protein bS20 family.

Functionally, binds directly to 16S ribosomal RNA. The polypeptide is Small ribosomal subunit protein bS20 (Rickettsia africae (strain ESF-5)).